A 9702-amino-acid polypeptide reads, in one-letter code: Nonribosomal peptide synthetase ungA (9702 aa).

The tract at residues 248 to 647 is adenylation 1; that stretch reads EQAQLRPHAP…ARKDTQVKIR (400 aa). The 78-residue stretch at 775–852 folds into the Carrier 1 domain; sequence APQTEMEYRL…MARAAQEKQT (78 aa). Position 812 is an O-(pantetheine 4'-phosphoryl)serine (Ser-812). Positions 891–1288 are condensation 1; sequence DILPCTPLQE…EAVLRHVCSQ (398 aa). The tract at residues 1330–1730 is adenylation 2; sequence QRTQQQPDAP…GRKDTQVKIR (401 aa). Residues 1857–1933 form the Carrier 2 domain; that stretch reads LPQSPMEKSL…RLARREIQTD (77 aa). Ser-1894 carries the O-(pantetheine 4'-phosphoryl)serine modification. Residues 1946-2374 are epimerization 1; the sequence is PFALSPIQQF…ERALEGTAVQ (429 aa). Residues 2414–2842 form a condensation 2 region; sequence EDIYPCSPLQ…LDTAILSPQD (429 aa). The adenylation 3 stretch occupies residues 2868 to 3267; the sequence is QVERQPDALA…GRKDTQVKIR (400 aa). The Carrier 3 domain occupies 3397 to 3473; it reads APTTEMERHL…EMSQVAKLGS (77 aa). At Ser-3434 the chain carries O-(pantetheine 4'-phosphoryl)serine. A condensation 3 region spans residues 3512-3920; the sequence is EDVFPCTPLQ…LLCDASHHQS (409 aa). Positions 3957 to 4361 are adenylation 4; sequence KQTQRRSAAQ…GRKDAQVKIR (405 aa). The Carrier 4 domain maps to 4491 to 4568; it reads PPTTDLERQI…LALSVSAAVD (78 aa). Ser-4528 is modified (O-(pantetheine 4'-phosphoryl)serine). The epimerization 2 stretch occupies residues 4583–5013; the sequence is ALSPIQQMFA…QAAAQALPLL (431 aa). Positions 5049 to 5474 are condensation 4; sequence VEDIYPCSPL…ANIISHQDLE (426 aa). An adenylation 5 region spans residues 5496-5899; the sequence is MQQAESQPGA…GRKDNQVKIH (404 aa). The 78-residue stretch at 6033–6110 folds into the Carrier 5 domain; that stretch reads TASSPEELEL…LVSHAQGNTA (78 aa). Position 6070 is an O-(pantetheine 4'-phosphoryl)serine (Ser-6070). Positions 6127–6551 are epimerization 3; the sequence is ELSPIQQLFF…CKSSLEAAAA (425 aa). The interval 6593-6935 is condensation 5; sequence VEDIYPCAPI…TGISVQGGAA (343 aa). Positions 7047 to 7447 are adenylation 6; the sequence is KRPDAPAIDA…GRRDNQVKVR (401 aa). In terms of domain architecture, Carrier 6 spans 7575–7655; it reads GPQTEVERLL…RSARTVQGHV (81 aa). The residue at position 7613 (Ser-7613) is an O-(pantetheine 4'-phosphoryl)serine. Positions 7670-8106 are epimerization 4; the sequence is DLAPVQQMFA…LVTASELLMQ (437 aa). The segment at 8144-8588 is condensation 6; sequence VEDIYPCSPI…EVDLSTDHDQ (445 aa). The segment at 8612–9025 is adenylation 7; sequence NTVQKQPHST…GRKDSQVKIR (414 aa). Residues 9158–9236 form the Carrier 7 domain; sequence SPTAPMERRL…LALLVREGDA (79 aa). An O-(pantetheine 4'-phosphoryl)serine modification is found at Ser-9196. The condensation 7 stretch occupies residues 9282–9629; that stretch reads DVYPTTDLQN…DNLEHDPGTA (348 aa).

The protein belongs to the NRP synthetase family.

It participates in secondary metabolite biosynthesis. In terms of biological role, nonribosomal peptide synthetase; part of the gene cluster that mediates the biosynthesis of the unguisins, gamma-aminobutyric acid (GABA)-containing fungal cyclic heptapeptides with the amino acid sequence cyclo-(D-Ala1-D-Val2-L-Phe3-D-Val4-D-Ala5-D-Trp6-GABA7) for unguisin A and cyclo-(D-Ala1-D-Val2-L-Leu3-D-Val4-D-Ala5-D-Trp6-GABA7) for unguisin B. UngA is the main enzyme within the cluster which condenses the 7 residues using its respective 7 modules. The terminal condensation domain (Ct) is involved in cyclization with D-alanine and thereby releasing of unguisins A and B. The alanine racemase ungC provides D-alanine, which is then accepted by the first adenylation domain of ungA. Finally, the hydrolase ungD catalyzes the hydrolysis between the D-tryptophan and GABA residues of unguisins A and B to produce the corresponding linear peptides. The sequence is that of Nonribosomal peptide synthetase ungA from Aspergillus violaceofuscus (strain CBS 115571).